A 429-amino-acid polypeptide reads, in one-letter code: Maltoporin 2 (429 aa).

An N-terminal signal peptide occupies residues 1–25 (MMITLRKLPLAVAVAAGVMSAQALA). Over residues 397-412 (GLQTKDSSGSGAFTSS) the composition is skewed to polar residues. The interval 397–416 (GLQTKDSSGSGAFTSSRGDD) is disordered.

The protein belongs to the porin LamB (TC 1.B.3) family. In terms of assembly, homotrimer formed of three 18-stranded antiparallel beta-barrels, containing three independent channels.

The protein resides in the cell outer membrane. It carries out the reaction beta-maltose(in) = beta-maltose(out). Involved in the transport of maltose and maltodextrins. In Klebsiella pneumoniae subsp. pneumoniae (strain ATCC 700721 / MGH 78578), this protein is Maltoporin 2.